Here is a 127-residue protein sequence, read N- to C-terminus: MIVGIGTDLVEIARIAALMTKRNEVFAKRILAQQELERFKQHGQPEKFLAKRWAAKEAISKALGTGFTQGVCFTDMIIGHTDQGQPLIELTGKTAEIAQQLGIENWSISISDEAHYAVAFVIAESRS.

2 residues coordinate Mg(2+): Asp8 and Glu57.

Belongs to the P-Pant transferase superfamily. AcpS family. It depends on Mg(2+) as a cofactor.

It is found in the cytoplasm. It catalyses the reaction apo-[ACP] + CoA = holo-[ACP] + adenosine 3',5'-bisphosphate + H(+). In terms of biological role, transfers the 4'-phosphopantetheine moiety from coenzyme A to a Ser of acyl-carrier-protein. This chain is Holo-[acyl-carrier-protein] synthase, found in Hydrogenovibrio crunogenus (strain DSM 25203 / XCL-2) (Thiomicrospira crunogena).